We begin with the raw amino-acid sequence, 330 residues long: Cobalamin biosynthesis protein CobD (330 aa).

The next 4 membrane-spanning stretches (helical) occupy residues 60–80 (TLVILTLAVFFTLLAIFPPIV), 153–173 (GIIAPLFWAVALSIFAPLLGV), 227–247 (LGIVAISFMAGYNGPQAWKIF), and 308–328 (IVLFTTFLLSLLFLLFRFVLT).

The protein belongs to the CobD/CbiB family.

It is found in the cell membrane. The protein operates within cofactor biosynthesis; adenosylcobalamin biosynthesis. Functionally, converts cobyric acid to cobinamide by the addition of aminopropanol on the F carboxylic group. The polypeptide is Cobalamin biosynthesis protein CobD (Desulfotalea psychrophila (strain LSv54 / DSM 12343)).